The chain runs to 657 residues: Threonine--tRNA ligase (657 aa).

The TGS domain maps to D7–T70. Positions D253–P555 are catalytic. Residues C351, H402, and H532 each contribute to the Zn(2+) site.

It belongs to the class-II aminoacyl-tRNA synthetase family. As to quaternary structure, homodimer. Zn(2+) serves as cofactor.

It localises to the cytoplasm. It carries out the reaction tRNA(Thr) + L-threonine + ATP = L-threonyl-tRNA(Thr) + AMP + diphosphate + H(+). Its function is as follows. Catalyzes the attachment of threonine to tRNA(Thr) in a two-step reaction: L-threonine is first activated by ATP to form Thr-AMP and then transferred to the acceptor end of tRNA(Thr). Also edits incorrectly charged L-seryl-tRNA(Thr). The polypeptide is Threonine--tRNA ligase (Chlorobaculum tepidum (strain ATCC 49652 / DSM 12025 / NBRC 103806 / TLS) (Chlorobium tepidum)).